The sequence spans 528 residues: Sensory rhodopsin I transducer (528 aa).

2 consecutive transmembrane segments (helical) span residues 11–31 (GAKLGVGYIATATLLITVGVV) and 35–55 (VASTVVAGIAGLLTLGSINAA). HAMP domains lie at 55-107 (AETV…DRLS) and 142-195 (TAYQ…ETIE). One can recognise a Methyl-accepting transducer domain in the interval 214-455 (TSRRVQQEVD…ATADSIADVT (242 aa)). Position 259 is a glutamate methyl ester (Glu) (glutamate 259).

The protein belongs to the methyl-accepting chemotaxis (MCP) protein family. Interacts with Sop1.

The protein resides in the cell membrane. In terms of biological role, transduces signals from the phototaxis receptor sensory rhodopsin I (Sop1). This Haloarcula marismortui (strain ATCC 43049 / DSM 3752 / JCM 8966 / VKM B-1809) (Halobacterium marismortui) protein is Sensory rhodopsin I transducer (htr1).